A 579-amino-acid chain; its full sequence is Insulin-like growth factor 2 mRNA-binding protein 3 (579 aa).

RRM domains lie at 2–75 and 81–156; these read NKLY…HSVP and RKLQ…YIPD. Residues 158–192 form a disordered region; sequence TAAQQNPSPQLRGRRGPGQRGSSRQASPGSVSKQK. Ser165 is modified (phosphoserine). Ser184 carries the phosphoserine; by MTOR modification. KH domains follow at residues 195-260, 276-343, and 405-470; these read DLPL…CKSI, EIPL…EEEI, and TETV…QGRI. Residues Lys450 and Lys475 each participate in a glycyl lysine isopeptide (Lys-Gly) (interchain with G-Cter in SUMO2) cross-link. A KH 4 domain is found at 487-553; the sequence is KLEAHIRVPS…YACQVAQRKI (67 aa). Thr528 is subject to Phosphothreonine.

Belongs to the RRM IMP/VICKZ family. Can form homooligomers and heterooligomers with IGF2BP1 and IGF2BP3 in an RNA-dependent manner. Interacts with IGF2BP1. Interacts with ELAVL1, DHX9, HNRNPU, MATR3 and PABPC1. As to expression, expressed in oocytes, spermatogonia and spermatocytes (at protein level).

The protein resides in the nucleus. The protein localises to the cytoplasm. It localises to the P-body. Its subcellular location is the stress granule. In terms of biological role, RNA-binding factor that may recruit target transcripts to cytoplasmic protein-RNA complexes (mRNPs). This transcript 'caging' into mRNPs allows mRNA transport and transient storage. It also modulates the rate and location at which target transcripts encounter the translational apparatus and shields them from endonuclease attacks or microRNA-mediated degradation. Preferentially binds to N6-methyladenosine (m6A)-containing mRNAs and increases their stability. Binds to the 3'-UTR of CD44 mRNA and stabilizes it, hence promotes cell adhesion and invadopodia formation. Binds to beta-actin/ACTB and MYC transcripts. Increases MYC mRNA stability by binding to the coding region instability determinant (CRD) and binding is enhanced by m6A-modification of the CRD. Binds to the 5'-UTR of the insulin-like growth factor 2 (IGF2) mRNAs. The protein is Insulin-like growth factor 2 mRNA-binding protein 3 (Igf2bp3) of Mus musculus (Mouse).